Consider the following 341-residue polypeptide: Anthranilate phosphoribosyltransferase (341 aa).

5-phospho-alpha-D-ribose 1-diphosphate-binding positions include Gly85, 88-89, Thr93, 95-98, 113-121, and Ser125; these read GD, NIST, and KHGNRSASG. An anthranilate-binding site is contributed by Gly85. Ser97 contributes to the Mg(2+) binding site. Asn116 provides a ligand contact to anthranilate. Residue Arg171 participates in anthranilate binding. The Mg(2+) site is built by Asp230 and Glu231.

The protein belongs to the anthranilate phosphoribosyltransferase family. As to quaternary structure, homodimer. It depends on Mg(2+) as a cofactor.

The enzyme catalyses N-(5-phospho-beta-D-ribosyl)anthranilate + diphosphate = 5-phospho-alpha-D-ribose 1-diphosphate + anthranilate. The protein operates within amino-acid biosynthesis; L-tryptophan biosynthesis; L-tryptophan from chorismate: step 2/5. Its function is as follows. Catalyzes the transfer of the phosphoribosyl group of 5-phosphorylribose-1-pyrophosphate (PRPP) to anthranilate to yield N-(5'-phosphoribosyl)-anthranilate (PRA). This is Anthranilate phosphoribosyltransferase from Prochlorococcus marinus (strain SARG / CCMP1375 / SS120).